Consider the following 708-residue polypeptide: Transcriptional regulator nsrM (708 aa).

The zn(2)-C6 fungal-type DNA-binding region spans 37–63 (CVRCQQRKVRCDHKSPCGNCVASDSQC).

Its subcellular location is the nucleus. Its function is as follows. Transcriptional regulator; part of the gene cluster that mediates the biosynthesis of the tetrahydroxanthone dimer neosartorin, which exhibits antibacterial activity. This Aspergillus novofumigatus (strain IBT 16806) protein is Transcriptional regulator nsrM.